Here is a 113-residue protein sequence, read N- to C-terminus: Prefoldin subunit beta (113 aa).

The protein belongs to the prefoldin subunit beta family. As to quaternary structure, heterohexamer of two alpha and four beta subunits.

The protein localises to the cytoplasm. Functionally, molecular chaperone capable of stabilizing a range of proteins. Seems to fulfill an ATP-independent, HSP70-like function in archaeal de novo protein folding. The polypeptide is Prefoldin subunit beta (Methanococcus maripaludis (strain C6 / ATCC BAA-1332)).